We begin with the raw amino-acid sequence, 390 residues long: GTPase Obg (390 aa).

In terms of domain architecture, Obg spans 1–159 (MKFVDEASVK…RELRLELLLL (159 aa)). The OBG-type G domain occupies 160 to 333 (ADVGMLGLPN…LCFKLGEFME (174 aa)). GTP contacts are provided by residues 166 to 173 (GLPNAGKS), 191 to 195 (FTTLI), 213 to 216 (DIPG), 283 to 286 (NKVD), and 314 to 316 (SAV). Mg(2+) is bound by residues serine 173 and threonine 193.

It belongs to the TRAFAC class OBG-HflX-like GTPase superfamily. OBG GTPase family. As to quaternary structure, monomer. Mg(2+) is required as a cofactor.

The protein resides in the cytoplasm. Functionally, an essential GTPase which binds GTP, GDP and possibly (p)ppGpp with moderate affinity, with high nucleotide exchange rates and a fairly low GTP hydrolysis rate. Plays a role in control of the cell cycle, stress response, ribosome biogenesis and in those bacteria that undergo differentiation, in morphogenesis control. The protein is GTPase Obg of Vibrio atlanticus (strain LGP32) (Vibrio splendidus (strain Mel32)).